A 182-amino-acid chain; its full sequence is MLQPPKVLLLYAHPESQDSVANRVLLQPVQQLEHVTVHDLYAHYPDFFIDIHHEQQLLRDHQVIVFQHPLYTYSCPALLKEWLDRVLARGFANGVGGHALTGKYWRSVITTGEQEGTYRIGGYNRYPMEDILRPFELTAAMCHMHWINPMIIYWARRQKPETLASHAQAYVQWLQSPLTRGL.

It belongs to the NAD(P)H dehydrogenase (quinone) family. KefG subfamily. Interacts with KefB.

Its subcellular location is the cell inner membrane. The catalysed reaction is a quinone + NADH + H(+) = a quinol + NAD(+). It carries out the reaction a quinone + NADPH + H(+) = a quinol + NADP(+). Its function is as follows. Regulatory subunit of a potassium efflux system that confers protection against electrophiles. Required for full activity of KefB. This is Glutathione-regulated potassium-efflux system ancillary protein KefG from Yersinia pseudotuberculosis serotype O:1b (strain IP 31758).